Reading from the N-terminus, the 209-residue chain is Large ribosomal subunit protein uL3 (209 aa).

The interval 125–148 is disordered; that stretch reads RHGQSRGPMAHGSRYHRRPGSMGP.

This sequence belongs to the universal ribosomal protein uL3 family. As to quaternary structure, part of the 50S ribosomal subunit. Forms a cluster with proteins L14 and L19.

Functionally, one of the primary rRNA binding proteins, it binds directly near the 3'-end of the 23S rRNA, where it nucleates assembly of the 50S subunit. In Lysinibacillus sphaericus (strain C3-41), this protein is Large ribosomal subunit protein uL3.